A 210-amino-acid polypeptide reads, in one-letter code: Viral protein 1 (210 aa).

The protein is Viral protein 1 of Chaetoceros (Chaetoceros sp. DNA virus 7).